A 673-amino-acid polypeptide reads, in one-letter code: RAS guanyl-releasing protein 4 (673 aa).

Basic residues-rich tracts occupy residues 1–10 (MNRKDSKRKS) and 20–32 (GRGR…RHKT). Disordered regions lie at residues 1–34 (MNRK…KTCP) and 162–188 (QSLG…PGLG). Positions 49-172 (GMLNEGGCSE…SLGDFSSRLS (124 aa)) constitute an N-terminal Ras-GEF domain. The 232-residue stretch at 201-432 (ETGELAEHLT…YELSYAREPR (232 aa)) folds into the Ras-GEF domain. Positions 466 to 501 (HVEQLVESVFKNYDPDGRGTISQEDFERLSGNFPFA) constitute an EF-hand domain. The Phorbol-ester/DAG-type zinc finger occupies 540–590 (LHTFQEVTFRKPTFCNSCSGFLWGVTKQGYRCRDCGLCCHRHCRDQVKVEC). Disordered stretches follow at residues 593–618 (RPGA…ASCG) and 638–673 (RHAW…KLNS). The span at 603-612 (PEAPVPPTPV) shows a compositional bias: pro residues.

It belongs to the RASGRP family.

It localises to the cytoplasm. It is found in the cell membrane. Functionally, functions as a cation- and diacylglycerol (DAG)-regulated nucleotide exchange factor activating Ras through the exchange of bound GDP for GTP. In neutrophils, participates in a phospholipase C-activating N-formyl peptide-activated GPCR (G protein-coupled receptor) signaling pathway by promoting Ras-mediated activation of PIK3CG/PI3Kgamma to promote neutrophil functional responses. In CD117(+) dendritic cells and mast cells, participates in an lipopolysaccharide (LPS)-activated signaling pathway that stimulates the production of interferon-gamma and other pro-inflammatory cytokines by natural killer (NK) cells. May function in mast cell differentiation. Does not appear to be required for the development of B-cells, DC-cells, T-cells, or NK-cells. This Bos taurus (Bovine) protein is RAS guanyl-releasing protein 4 (RASGRP4).